The chain runs to 103 residues: Trp operon repressor homolog (103 aa).

Residues 59–82 mediate DNA binding; that stretch reads QRQISQMLGVGIATITRGSNELKS.

The protein belongs to the TrpR family. In terms of assembly, homodimer.

The protein resides in the cytoplasm. Its function is as follows. This protein is an aporepressor. When complexed with L-tryptophan it binds the operator region of the trp operon and prevents the initiation of transcription. This is Trp operon repressor homolog from Vibrio parahaemolyticus serotype O3:K6 (strain RIMD 2210633).